The primary structure comprises 92 residues: UPF0223 protein SZO_10560 (92 aa).

This sequence belongs to the UPF0223 family.

The sequence is that of UPF0223 protein SZO_10560 from Streptococcus equi subsp. zooepidemicus (strain H70).